We begin with the raw amino-acid sequence, 335 residues long: E3 ubiquitin-protein ligase NLA (335 aa).

In terms of domain architecture, SPX spans 1–154; that stretch reads MKFCKKYEEY…ESRQGQAFKT (154 aa). The RING-type zinc-finger motif lies at 231–280; sequence CSICLDTVFDPISLTCGHIYCYMCACSAASVNVVDGLKTAEATEKCPLCR.

In terms of assembly, interacts with UBC8. Interacts with PHT1-1 and PHT1-4. Forms homodimers (via RING domain). Interacts with UBC24/PHO2. Interacts with NPF2.13/NRT1.7. Interacts with NAC92/ORE1. As to expression, high expression in roots and stems, medium in seedlings, flowers, rosette and cauline leaves, and very low in siliques. Detected in cotyledons, hypocotyls, pedicel, receptacle, pistil, sepal, filament of stamen and at the two ends of developing siliques.

It localises to the nucleus speckle. Its subcellular location is the nucleus. The protein resides in the cell membrane. The catalysed reaction is S-ubiquitinyl-[E2 ubiquitin-conjugating enzyme]-L-cysteine + [acceptor protein]-L-lysine = [E2 ubiquitin-conjugating enzyme]-L-cysteine + N(6)-ubiquitinyl-[acceptor protein]-L-lysine.. The protein operates within protein modification; protein ubiquitination. Its function is as follows. E3 ubiquitin-protein ligase that mediates E2-dependent protein ubiquitination. Plays a role in salicylic acid-mediated negative feedback regulation of salicylic acid (SA) accumulation. May be involved in the overall regulation of SA, benzoic acid and phenylpropanoid biosynthesis. Involved in defense response. May act as negative regulator of resistance to the necrotrophic fungal pathogen Plectosphaerella cucumerina by modulating the accumulation of the phytoalexin camalexin and the salicylic acid- and jasmonate- dependent defense pathways. Controls the adaptability to nitrogen limitation by channeling the phenylpropanoid metabolic flux to the induced anthocyanin synthesis. Involved in the regulation of inorganic phosphate (Pi) homeostasis in a nitrate-dependent fashion. Directs the ubiquitination and subsequent degradation of the plasma membrane-localized inorganic phosphate transporters PHT1-1 and PHT1-4, to maintain phosphate homeostasis. The ubiquitination of PHTs triggers their clathrin-dependent endocytosis and trafficking to the vacuole through the endosomal pathway for degradation. Functions cooperatively with UBC24/PHO2 to regulate the abundance of PHT1-1, PHT1-2 and PHT1-3 in different subcellular compartments. Regulates Pi homeostasis by mediating, cooperatively with UBC24/PHO2, polyubiquitination of PHT1-4 and its targeting for degradation. Directs the polyubiquitination and subsequent degradation of the plasma membrane-localized nitrate transporter NPF2.13/NRT1.7, to help plants to adapt to nitrogen deficiency by regulating the source-to-sink remobilization of nitrate. Regulates leaf senescence during nitrogen deficiency by mediating, cooperatively with UBC24/PHO2, polyubiquitination of NAC92/ORE1 and its targeting for degradation. This is E3 ubiquitin-protein ligase NLA from Arabidopsis thaliana (Mouse-ear cress).